A 253-amino-acid chain; its full sequence is Giant extracellular hemoglobin linker 1 chain (253 aa).

In terms of domain architecture, LDL-receptor class A spans 89-131 (HHCDDDHLSCKDVAFTCIGHNLVCDGHKDCLNGHDEDEETCSI). 3 disulfide bridges follow: C91–C105, C98–C118, and C112–C129.

In terms of assembly, disulfide-linked dimer of identical chains. A model is proposed for the subunit structure of the Tylorrhynchus hemoglobin, consisting of 216 polypeptide chains, 192 heme-containing chains, and 24 linker chains.

Its function is as follows. Acts as a linker for the assembly of heme-containing chains in the construction of giant hemoglobin. In Tylorrhynchus heterochetus (Japanese palolo worm), this protein is Giant extracellular hemoglobin linker 1 chain.